Here is a 377-residue protein sequence, read N- to C-terminus: Actin-related protein 2/3 complex subunit 1 (377 aa).

WD repeat units lie at residues 9-48 (ILPKPSYEHAFNSQRTEFVTTTATNQVELYEQDGNGWKHA), 53-92 (DHDKIVTCVDWAPKSNRIVTCSQDRNAYVYEKRPDGTWKQ), 98-139 (RLNR…WVSK), 144-183 (PLRSTILSLDWHPNNVLLAAGCADRKAYVLSAYVRDVDAK), and 203-242 (PSGGWVHAVGFSPSGNALAYAGHDSSVTIAYPSAPEQPPR). Residues 293 to 313 (GTSKTSFTHTGNTGEGREEEG) form a disordered region. The WD 6 repeat unit spans residues 342 to 376 (VHQNMIATLRPYAGTPGNITAFTSSGTDGRVVLWT).

It belongs to the WD repeat ARPC1 family. Component of the Arp2/3 complex composed of arp2, act2, arc1/p41-ARC, arc2/p34-ARC, arc3/p21-ARC, arc4/p20-ARC and arc5/p16-ARC.

It is found in the cytoplasm. The protein localises to the cytoskeleton. Its subcellular location is the actin patch. In terms of biological role, functions as a component of the Arp2/3 complex which is involved in regulation of actin polymerization and together with an activating nucleation-promoting factor (NPF) mediates the formation of branched actin networks. The polypeptide is Actin-related protein 2/3 complex subunit 1 (arc1) (Schizosaccharomyces pombe (strain 972 / ATCC 24843) (Fission yeast)).